The primary structure comprises 224 residues: UPF0173 metal-dependent hydrolase TON_1314 (224 aa).

The protein belongs to the UPF0173 family.

The polypeptide is UPF0173 metal-dependent hydrolase TON_1314 (Thermococcus onnurineus (strain NA1)).